The chain runs to 259 residues: Probable ABC transporter permease protein RBE_1340 (259 aa).

The next 5 helical transmembrane spans lie at 25-45, 49-69, 148-168, 195-215, and 237-257; these read IFSL…SLII, LFIG…SGAV, VIAA…IGVM, PIDV…ISII, and AVVN…ELFF.

This sequence belongs to the MlaE permease family.

It localises to the cell inner membrane. Its function is as follows. Could be part of an ABC transporter complex. This is Probable ABC transporter permease protein RBE_1340 from Rickettsia bellii (strain RML369-C).